The following is a 486-amino-acid chain: GDP-Man:Man(3)GlcNAc(2)-PP-Dol alpha-1,2-mannosyltransferase (486 aa).

Over 1-16 (MAGPMCLCGMMRLLTA) the chain is Lumenal. The helical transmembrane segment at 17–37 (LFIPVLITSVGLCLIFVLLFI) threads the bilayer. The Cytoplasmic portion of the chain corresponds to 38 to 229 (CTRLWVQRKK…SNNPVLSRLK (192 aa)). Residues 230-250 (LIYYYLFALFYGWVGSCSDVI) constitute an intramembrane region (helical). Residues 251–393 (MVNSTWTFSH…IGLHTMWNEH (143 aa)) are Cytoplasmic-facing. The segment at residues 394–414 (FGIGIVECMAAGTIILAHNSG) is an intramembrane region (helical). The Cytoplasmic portion of the chain corresponds to 415–486 (GPKLDIVVPH…FLASSEPLFK (72 aa)).

It belongs to the glycosyltransferase group 1 family. Glycosyltransferase 4 subfamily.

Its subcellular location is the endoplasmic reticulum membrane. It carries out the reaction an alpha-D-Man-(1-&gt;3)-[alpha-D-Man-(1-&gt;6)]-beta-D-Man-(1-&gt;4)-beta-D-GlcNAc-(1-&gt;4)-alpha-D-GlcNAc-diphospho-di-trans,poly-cis-dolichol + 2 GDP-alpha-D-mannose = an alpha-D-Man-(1-&gt;2)-alpha-D-Man-(1-&gt;2)-alpha-D-Man-(1-&gt;3)-[alpha-D-Man-(1-&gt;6)]-beta-D-Man-(1-&gt;4)-beta-D-GlcNAc-(1-&gt;4)-alpha-D-GlcNAc-diphospho-di-trans,poly-cis-dolichol + 2 GDP + 2 H(+). The protein operates within protein modification; protein glycosylation. Its function is as follows. GDP-Man:Man(3)GlcNAc(2)-PP-Dol alpha-1,2-mannosyltransferase that operates in the biosynthetic pathway of dolichol-linked oligosaccharides, the glycan precursors employed in protein asparagine (N)-glycosylation. The assembly of dolichol-linked oligosaccharides begins on the cytosolic side of the endoplasmic reticulum membrane and finishes in its lumen. The sequential addition of sugars to dolichol pyrophosphate produces dolichol-linked oligosaccharides containing fourteen sugars, including two GlcNAcs, nine mannoses and three glucoses. Once assembled, the oligosaccharide is transferred from the lipid to nascent proteins by oligosaccharyltransferases. Catalyzes, on the cytoplasmic face of the endoplasmic reticulum, the addition of the fourth and fifth mannose residues to the dolichol-linked oligosaccharide chain, to produce Man(5)GlcNAc(2)-PP-dolichol core oligosaccharide. Man(5)GlcNAc(2)-PP-dolichol is a substrate for ALG3, the following enzyme in the biosynthetic pathway. This is GDP-Man:Man(3)GlcNAc(2)-PP-Dol alpha-1,2-mannosyltransferase (alg11) from Xenopus laevis (African clawed frog).